A 230-amino-acid polypeptide reads, in one-letter code: Spliceosome-associated protein CWC15 homolog (230 aa).

2 disordered regions span residues 1-157 (MTTA…EEKQ) and 164-183 (AGNP…GGDF). The span at 25 to 34 (KLSNQYSSKD) shows a compositional bias: polar residues. Coiled-coil stretches lie at residues 47 to 82 (GQET…SASS) and 119 to 164 (DSDE…NILA). Residues 52 to 78 (ADLRKKDLRRELEDKERNAIREKRARD) are compositionally biased toward basic and acidic residues. Positions 104–125 (DADEAVDELNSSDDDDSDEDDT) are enriched in acidic residues. The segment covering 131–157 (ELEKIKKERAEEKAARDEEIKEKEEKQ) has biased composition (basic and acidic residues).

This sequence belongs to the CWC15 family. In terms of assembly, component of spliceosomal complex.

The protein localises to the nucleus. Functionally, component of a spliceosomal complex that is required for activating pre-mRNA splicing. This chain is Spliceosome-associated protein CWC15 homolog, found in Caenorhabditis elegans.